The chain runs to 438 residues: Dol-P-Man:Man(5)GlcNAc(2)-PP-Dol alpha-1,3-mannosyltransferase (438 aa).

At S13 the chain carries Phosphoserine. Transmembrane regions (helical) follow at residues 41–61 (YTLLVASCLCIAEVGITFWVI), 95–115 (TGPLVYPAGFLYIFTGLFYAT), 123–143 (MAQNIFAVLYLVTLVLVFLIY), 149–169 (VPPFVFFFMCCASYRVHSIFV), 172–192 (LFNDPVAMALLFLSINLFLAQ), 203–223 (LAVSVKMNVLLFAPGLLFLLL), 231–251 (ALPKLAICAALQVVLGLPFLL), 289–309 (FHLALLAAHLSLLLLFALCRW), 332–352 (ALTPNQIVSILFTSNFIGICF), 356–376 (LHYQFYVWYFHTLPYLLWAMP), and 407–427 (AALHLCHAVVLLQLWLSPESF).

This sequence belongs to the glycosyltransferase ALG3 family.

It is found in the endoplasmic reticulum membrane. The catalysed reaction is an alpha-D-Man-(1-&gt;2)-alpha-D-Man-(1-&gt;2)-alpha-D-Man-(1-&gt;3)-[alpha-D-Man-(1-&gt;6)]-beta-D-Man-(1-&gt;4)-beta-D-GlcNAc-(1-&gt;4)-alpha-D-GlcNAc-diphospho-di-trans,poly-cis-dolichol + a di-trans,poly-cis-dolichyl beta-D-mannosyl phosphate = an alpha-D-Man-(1-&gt;2)-alpha-D-Man-(1-&gt;2)-alpha-D-Man-(1-&gt;3)-[alpha-D-Man-(1-&gt;3)-alpha-D-Man-(1-&gt;6)]-beta-D-Man-(1-&gt;4)-beta-D-GlcNAc-(1-&gt;4)-alpha-D-GlcNAc-diphospho-di-trans,poly-cis-dolichol + a di-trans,poly-cis-dolichyl phosphate + H(+). Its pathway is protein modification; protein glycosylation. Functionally, dol-P-Man:Man(5)GlcNAc(2)-PP-Dol alpha-1,3-mannosyltransferase that operates in the biosynthetic pathway of dolichol-linked oligosaccharides, the glycan precursors employed in protein asparagine (N)-glycosylation. The assembly of dolichol-linked oligosaccharides begins on the cytosolic side of the endoplasmic reticulum membrane and finishes in its lumen. The sequential addition of sugars to dolichol pyrophosphate produces dolichol-linked oligosaccharides containing fourteen sugars, including two GlcNAcs, nine mannoses and three glucoses. Once assembled, the oligosaccharide is transferred from the lipid to nascent proteins by oligosaccharyltransferases. In the lumen of the endoplasmic reticulum, adds the first dolichyl beta-D-mannosyl phosphate derived mannose in an alpha-1,3 linkage to Man(5)GlcNAc(2)-PP-dolichol to produce Man(6)GlcNAc(2)-PP-dolichol. Man(6)GlcNAc(2)-PP-dolichol is a substrate for ALG9, the following enzyme in the biosynthetic pathway. The polypeptide is Dol-P-Man:Man(5)GlcNAc(2)-PP-Dol alpha-1,3-mannosyltransferase (Mus musculus (Mouse)).